The primary structure comprises 294 residues: Acetylglutamate kinase (294 aa).

Residues 67-68, arginine 89, and asparagine 193 each bind substrate; that span reads GG.

It belongs to the acetylglutamate kinase family. ArgB subfamily.

The protein localises to the cytoplasm. It catalyses the reaction N-acetyl-L-glutamate + ATP = N-acetyl-L-glutamyl 5-phosphate + ADP. The protein operates within amino-acid biosynthesis; L-arginine biosynthesis; N(2)-acetyl-L-ornithine from L-glutamate: step 2/4. Catalyzes the ATP-dependent phosphorylation of N-acetyl-L-glutamate. The protein is Acetylglutamate kinase of Leptospira interrogans serogroup Icterohaemorrhagiae serovar copenhageni (strain Fiocruz L1-130).